We begin with the raw amino-acid sequence, 433 residues long: Beta-agarase AgaA (433 aa).

The N-terminal stretch at Met-1 to Ala-20 is a signal peptide. The 275-residue stretch at Ala-21 to Ile-295 folds into the GH16 domain. The active-site Nucleophile is Glu-147. Residue Glu-152 is the Proton donor of the active site. A CBM6 domain is found at Thr-300–Val-431.

This sequence belongs to the glycosyl hydrolase 16 family. In terms of assembly, monomer.

The protein resides in the periplasm. It catalyses the reaction Hydrolysis of (1-&gt;4)-beta-D-galactosidic linkages in agarose, giving the tetramer as the predominant product.. With respect to regulation, activity is abolished by Hg(2+), Cu(2+), Pb(2+) and Zn(2+) ions, but is not affected by NaCl up to at least 1.0 M, Mg(2+), K(+) and Ca(2+). Not affected by iodoacetamide, p-chloromercuribenzoate, dithiothreitol, 2-mercaptoethanol, EDTA and sodium dodecyl sulfate. Inhibited by N-bromosuccinimide. Its function is as follows. Endo-type beta-agarase, which produces neoagarotetraose (NA4) as the main final product, with a small amount of neoagarohexaose (NA6) and neoagarobiose (NA2). The chain is Beta-agarase AgaA from Microbulbifer thermotolerans.